Consider the following 242-residue polypeptide: DNA repair protein RecO (242 aa).

It belongs to the RecO family. In terms of assembly, monomer.

Functionally, involved in DNA repair and RecF pathway recombination. This Salmonella enteritidis PT4 (strain P125109) protein is DNA repair protein RecO.